Reading from the N-terminus, the 315-residue chain is Neurogenic differentiation factor 4 (315 aa).

Residues 39–71 (ERGSIDGEEDDEEEEDGEKPKKRGPKKKKMTKA) are disordered. Positions 44-55 (DGEEDDEEEEDG) are enriched in acidic residues. A compositionally biased stretch (basic residues) spans 58–70 (PKKRGPKKKKMTK). The bHLH domain occupies 78 to 130 (VRRVKANARERSRMHGLNDALENLRRVMPCYSKTQKLSKIETLRLARNYIWAL). Phosphoserine is present on Ser89.

In terms of assembly, efficient DNA binding requires dimerization with another bHLH protein. Forms a heterodimer with the bHLH protein hes2, and weakly interacts with hey1/hrt1. Serine or threonine phosphorylation within the basic region may regulate neurogenic activity. As to expression, first expressed weakly at stage 12 in primary neuronal precursors. At stages 18 and 21, strongly expressed in the cranial ganglions, with weaker expression remaining in the spinal cord. Later, strongly expressed at sites of neuronal differentiation, namely the eye, forebrain and cranial ganglions.

Its subcellular location is the nucleus. Functionally, probably acts as a transcriptional activator. Mediates neuronal differentiation. Required for the regulation of amacrine cell fate specification in the retina. This chain is Neurogenic differentiation factor 4 (neurod4), found in Xenopus laevis (African clawed frog).